A 756-amino-acid chain; its full sequence is Anaphase-promoting complex subunit 5 (756 aa).

TPR repeat units lie at residues 301-334 (RYAALNLAALHCRFGHYQQAELALQEAIRIAQES), 522-555 (DGRYHIADSLVAGITALNSIEGMYRKAIVLKAQN), 581-614 (ISVLLSVAELYWRSSCHTIALPVLLQALAFSREY), and 678-711 (YSQQKKAEALESAILNLNEAKTYLAKVDCKEQLR).

Belongs to the APC5 family. In terms of assembly, the APC/C is composed of at least 12 subunits.

The protein resides in the nucleus. Its subcellular location is the cytoplasm. The protein localises to the cytoskeleton. It localises to the spindle. The protein operates within protein modification; protein ubiquitination. Component of the anaphase promoting complex/cyclosome (APC/C), a cell cycle-regulated E3 ubiquitin ligase that controls progression through mitosis and the G1 phase of the cell cycle. The APC/C complex acts by mediating ubiquitination and subsequent degradation of target proteins: it mainly mediates the formation of 'Lys-11'-linked polyubiquitin chains and, to a lower extent, the formation of 'Lys-48'- and 'Lys-63'-linked polyubiquitin chains. The APC/C complex catalyzes assembly of branched 'Lys-11'-/'Lys-48'-linked branched ubiquitin chains on target proteins. This Gallus gallus (Chicken) protein is Anaphase-promoting complex subunit 5 (ANAPC5).